A 372-amino-acid chain; its full sequence is Probable G-protein coupled receptor 45 (372 aa).

At 1-38 (MACNSTSLEAYTYLLLNTSNASDSGSTQLPAPLRISLA) the chain is on the extracellular side. Asparagine 4, asparagine 17, and asparagine 20 each carry an N-linked (GlcNAc...) asparagine glycan. A helical transmembrane segment spans residues 39–59 (IVMLLMTVVGFLGNTVVCIIV). Residues 60–75 (YQRPAMRSAINLLLAT) are Cytoplasmic-facing. Residues 76–96 (LAFSDIMLSLCCMPFTAVTLI) traverse the membrane as a helical segment. Residues 97 to 109 (TVRWHFGDHFCRL) lie on the Extracellular side of the membrane. The chain crosses the membrane as a helical span at residues 110–130 (SATLYWFFVLEGVAILLIISV). The Cytoplasmic portion of the chain corresponds to 131-149 (DRFLIIVQRQDKLNPRRAK). The helical transmembrane segment at 150–170 (VIIAVSWVLSFCIAGPSLTGW) threads the bilayer. Residues 171–198 (TLVEVPARAPQCVLGYTELPADRAYVVT) lie on the Extracellular side of the membrane. The helical transmembrane segment at 199–219 (LVVAVFFAPFGVMLCAYMCIL) threads the bilayer. Over 220–268 (NTVRKNAVRVHNQSDSLDLRQLTRAGLRRLQRQQQVSVDLSFKTKAFTT) the chain is Cytoplasmic. The helical transmembrane segment at 269-289 (ILILFVGFSLCWLPHSVYSLL) threads the bilayer. At 290–305 (SVFSQRFYCGSSFYAT) the chain is on the extracellular side. The chain crosses the membrane as a helical span at residues 306–326 (STCVLWLSYLKSVFNPIVYCW). The Cytoplasmic segment spans residues 327–372 (RIKKFREACIELLPQTFQILPKVPERIRRRIQPSTVYVCNENQSAV).

This sequence belongs to the G-protein coupled receptor 1 family. As to expression, expressed in brain; detected in the basal forebrain, frontal cortex, and caudate, but not in thalamus, hippocampus, or putamen.

It localises to the cell membrane. Functionally, orphan receptor. May play a role in brain function. The protein is Probable G-protein coupled receptor 45 (GPR45) of Homo sapiens (Human).